Reading from the N-terminus, the 817-residue chain is Exocyst complex component 6 (817 aa).

2 coiled-coil regions span residues 87–149 (QSFV…DQIA) and 247–270 (TDAE…EIEV).

It belongs to the SEC15 family. In terms of assembly, the exocyst complex is composed of sec-3/exoc1, sec-5/exoc2, sec-6/exoc3, sec-8/exoc4, sec-10/exoc5, sec-15/exoc6, exo-70/exoc7 and exo-84/exoc8.

In terms of biological role, component of the exocyst complex involved in the docking of exocytic vesicles with fusion sites on the plasma membrane. This is Exocyst complex component 6 (sec-15) from Caenorhabditis elegans.